The sequence spans 213 residues: FMN-dependent NADH:quinone oxidoreductase 3 (213 aa).

FMN is bound by residues S10, 16–18 (SVS), and 96–99 (MYNF).

This sequence belongs to the azoreductase type 1 family. In terms of assembly, homodimer. FMN serves as cofactor.

The catalysed reaction is 2 a quinone + NADH + H(+) = 2 a 1,4-benzosemiquinone + NAD(+). It carries out the reaction N,N-dimethyl-1,4-phenylenediamine + anthranilate + 2 NAD(+) = 2-(4-dimethylaminophenyl)diazenylbenzoate + 2 NADH + 2 H(+). Its function is as follows. Quinone reductase that provides resistance to thiol-specific stress caused by electrophilic quinones. Shows a preference for naphthoquinones such as plumbagin. Functionally, also exhibits azoreductase activity. Catalyzes the reductive cleavage of the azo bond in aromatic azo compounds to the corresponding amines. Preferred substrates are methyl red, amaranth and p-aminoazobenzene sulfonamide (PAABSA). This is FMN-dependent NADH:quinone oxidoreductase 3 from Pseudomonas aeruginosa (strain ATCC 15692 / DSM 22644 / CIP 104116 / JCM 14847 / LMG 12228 / 1C / PRS 101 / PAO1).